The sequence spans 336 residues: Probable ADP-ribosylation factor GTPase-activating protein AGD13 (336 aa).

The Arf-GAP domain maps to 15–137 (KRRIRDLLNQ…EFLKPSLRIT (123 aa)). The C4-type zinc-finger motif lies at 30 to 53 (CADCGASDPKWASANIGVFICLKC). A C2 domain is found at 162 to 280 (RTNSSSQTMF…AMAFGDPEMF (119 aa)). Residues aspartate 249, serine 252, and aspartate 255 each coordinate Ca(2+).

The cofactor is Ca(2+).

GTPase-activating protein (GAP) for ADP ribosylation factor (ARF). The chain is Probable ADP-ribosylation factor GTPase-activating protein AGD13 (AGD13) from Arabidopsis thaliana (Mouse-ear cress).